A 292-amino-acid chain; its full sequence is tRNA (guanine-N(1)-)-methyltransferase (292 aa).

S-adenosyl-L-methionine is bound by residues Gly-151 and 175 to 180 (IGDYVL).

This sequence belongs to the RNA methyltransferase TrmD family. As to quaternary structure, homodimer.

It is found in the cytoplasm. It catalyses the reaction guanosine(37) in tRNA + S-adenosyl-L-methionine = N(1)-methylguanosine(37) in tRNA + S-adenosyl-L-homocysteine + H(+). Specifically methylates guanosine-37 in various tRNAs. The chain is tRNA (guanine-N(1)-)-methyltransferase from Corynebacterium diphtheriae (strain ATCC 700971 / NCTC 13129 / Biotype gravis).